The primary structure comprises 207 residues: Histone H1 (207 aa).

Over residues 1-15 (MAEVAPAPAAAAPAK) the composition is skewed to low complexity. 2 disordered regions span residues 1-28 (MAEV…PKKA) and 105-207 (EAKK…PKKK). Position 2 is an N-acetylalanine (alanine 2). Residues 16 to 27 (APKKKAAAKPKK) show a composition bias toward basic residues. Residues 28-101 (AGPSVGELIV…GASGSFKLNK (74 aa)) enclose the H15 domain. 2 stretches are compositionally biased toward basic residues: residues 117 to 168 (KAKK…KVKK) and 175 to 207 (KAAK…PKKK).

Belongs to the histone H1/H5 family. Oncorhyncin II is expressed in skin.

The protein localises to the nucleus. It is found in the chromosome. The protein resides in the secreted. In terms of biological role, histones H1 are necessary for the condensation of nucleosome chains into higher-order structures. Functionally, oncorhyncin II has antibacterial activity against Gram-positive and Gram-negative bacteria at submicromolar concentrations. Potentially important role in mucosal defense. The polypeptide is Histone H1 (Oncorhynchus mykiss (Rainbow trout)).